Reading from the N-terminus, the 323-residue chain is Pyruvate dehydrogenase E1 component subunit beta (323 aa).

Residue glutamate 60 coordinates thiamine diphosphate. 5 residues coordinate K(+): isoleucine 113, alanine 161, isoleucine 162, aspartate 164, and asparagine 166.

As to quaternary structure, heterodimer of an alpha and a beta chain. Thiamine diphosphate serves as cofactor.

It localises to the plastid. The protein localises to the chloroplast. It carries out the reaction N(6)-[(R)-lipoyl]-L-lysyl-[protein] + pyruvate + H(+) = N(6)-[(R)-S(8)-acetyldihydrolipoyl]-L-lysyl-[protein] + CO2. In terms of biological role, the pyruvate dehydrogenase complex catalyzes the overall conversion of pyruvate to acetyl-CoA and CO(2). It contains multiple copies of three enzymatic components: pyruvate dehydrogenase (E1), dihydrolipoamide acetyltransferase (E2) and lipoamide dehydrogenase (E3). In Gracilaria tenuistipitata var. liui (Red alga), this protein is Pyruvate dehydrogenase E1 component subunit beta (pdhB).